The chain runs to 631 residues: Pro-interleukin-16 (631 aa).

Disordered stretches follow at residues glutamate 30 to threonine 269 and proline 317 to threonine 344. Over residues serine 132–serine 144 the composition is skewed to low complexity. At serine 221 the chain carries Phosphoserine. A compositionally biased stretch (polar residues) spans serine 322 to threonine 344. The tract at residues lysine 405 to serine 501 is interaction with PPP1R12A, PPP1R12B and PPP1R12C. 2 PDZ domains span residues histidine 411–lysine 496 and threonine 533–lysine 618.

In terms of assembly, homotetramer. Pro-interleukin-16 interacts (via PDZ 2 domain) with PPP1R12A, PPP1R12B and PPP1R12C. Pro-interleukin-16 interacts with GRIN2A. Pro-interleukin-16 interacts with GABPB1. Pro-interleukin-16 interacts (via PDZ 3 domain) with HDAC3.

The protein localises to the secreted. It localises to the cytoplasm. It is found in the nucleus. Functionally, interleukin-16 stimulates a migratory response in CD4+ lymphocytes, monocytes, and eosinophils. Primes CD4+ T-cells for IL-2 and IL-15 responsiveness. Also induces T-lymphocyte expression of interleukin 2 receptor. Ligand for CD4. In terms of biological role, pro-interleukin-16 is involved in cell cycle progression in T-cells. Appears to be involved in transcriptional regulation of SKP2 and is probably part of a transcriptional repression complex on the core promoter of the SKP2 gene. May act as a scaffold for GABPB1 (the DNA-binding subunit the GABP transcription factor complex) and HDAC3 thus maintaining transcriptional repression and blocking cell cycle progression in resting T-cells. This Chlorocebus aethiops (Green monkey) protein is Pro-interleukin-16 (IL16).